A 484-amino-acid polypeptide reads, in one-letter code: tRNA sulfurtransferase (484 aa).

One can recognise a THUMP domain in the interval 63-167; sequence REMIERLCCT…DQRLFVVHRQ (105 aa). ATP-binding positions include 185 to 186, lysine 267, glycine 289, and glutamine 298; that span reads LM. Cysteine 346 and cysteine 457 form a disulfide bridge. The 79-residue stretch at 405–483 folds into the Rhodanese domain; the sequence is ALAGQIVLDI…GHANVRVYRP (79 aa). Cysteine 457 functions as the Cysteine persulfide intermediate in the catalytic mechanism.

It belongs to the ThiI family.

Its subcellular location is the cytoplasm. The enzyme catalyses [ThiI sulfur-carrier protein]-S-sulfanyl-L-cysteine + a uridine in tRNA + 2 reduced [2Fe-2S]-[ferredoxin] + ATP + H(+) = [ThiI sulfur-carrier protein]-L-cysteine + a 4-thiouridine in tRNA + 2 oxidized [2Fe-2S]-[ferredoxin] + AMP + diphosphate. It catalyses the reaction [ThiS sulfur-carrier protein]-C-terminal Gly-Gly-AMP + S-sulfanyl-L-cysteinyl-[cysteine desulfurase] + AH2 = [ThiS sulfur-carrier protein]-C-terminal-Gly-aminoethanethioate + L-cysteinyl-[cysteine desulfurase] + A + AMP + 2 H(+). It participates in cofactor biosynthesis; thiamine diphosphate biosynthesis. Functionally, catalyzes the ATP-dependent transfer of a sulfur to tRNA to produce 4-thiouridine in position 8 of tRNAs, which functions as a near-UV photosensor. Also catalyzes the transfer of sulfur to the sulfur carrier protein ThiS, forming ThiS-thiocarboxylate. This is a step in the synthesis of thiazole, in the thiamine biosynthesis pathway. The sulfur is donated as persulfide by IscS. This is tRNA sulfurtransferase from Azotobacter vinelandii (strain DJ / ATCC BAA-1303).